A 704-amino-acid polypeptide reads, in one-letter code: DNA ligase (704 aa).

NAD(+) contacts are provided by residues 43-47 (DADYD), 92-93 (SL), and Glu124. The N6-AMP-lysine intermediate role is filled by Lys126. Residues Arg147, Glu182, Lys298, and Lys322 each coordinate NAD(+). 4 residues coordinate Zn(2+): Cys427, Cys430, Cys445, and Cys451. Positions 625 to 704 (PVASPVAGKI…DGWLRLIGDA (80 aa)) constitute a BRCT domain.

Belongs to the NAD-dependent DNA ligase family. LigA subfamily. Mg(2+) serves as cofactor. It depends on Mn(2+) as a cofactor.

It carries out the reaction NAD(+) + (deoxyribonucleotide)n-3'-hydroxyl + 5'-phospho-(deoxyribonucleotide)m = (deoxyribonucleotide)n+m + AMP + beta-nicotinamide D-nucleotide.. DNA ligase that catalyzes the formation of phosphodiester linkages between 5'-phosphoryl and 3'-hydroxyl groups in double-stranded DNA using NAD as a coenzyme and as the energy source for the reaction. It is essential for DNA replication and repair of damaged DNA. The polypeptide is DNA ligase (Cereibacter sphaeroides (strain ATCC 17029 / ATH 2.4.9) (Rhodobacter sphaeroides)).